Here is a 299-residue protein sequence, read N- to C-terminus: Pyridoxal 5'-phosphate synthase subunit PdxS (299 aa).

Aspartate 24 lines the D-ribose 5-phosphate pocket. Lysine 81 functions as the Schiff-base intermediate with D-ribose 5-phosphate in the catalytic mechanism. Glycine 153 is a binding site for D-ribose 5-phosphate. Arginine 165 serves as a coordination point for D-glyceraldehyde 3-phosphate. Residues glycine 219 and 240-241 (GS) contribute to the D-ribose 5-phosphate site.

This sequence belongs to the PdxS/SNZ family. As to quaternary structure, in the presence of PdxT, forms a dodecamer of heterodimers.

It catalyses the reaction aldehydo-D-ribose 5-phosphate + D-glyceraldehyde 3-phosphate + L-glutamine = pyridoxal 5'-phosphate + L-glutamate + phosphate + 3 H2O + H(+). It participates in cofactor biosynthesis; pyridoxal 5'-phosphate biosynthesis. Functionally, catalyzes the formation of pyridoxal 5'-phosphate from ribose 5-phosphate (RBP), glyceraldehyde 3-phosphate (G3P) and ammonia. The ammonia is provided by the PdxT subunit. Can also use ribulose 5-phosphate and dihydroxyacetone phosphate as substrates, resulting from enzyme-catalyzed isomerization of RBP and G3P, respectively. The protein is Pyridoxal 5'-phosphate synthase subunit PdxS of Methanococcus maripaludis (strain C6 / ATCC BAA-1332).